The primary structure comprises 712 residues: Polyribonucleotide nucleotidyltransferase (712 aa).

Aspartate 487 and aspartate 493 together coordinate Mg(2+). In terms of domain architecture, KH spans 554 to 613; sequence PKILTMQINPEKIREVIGPSGKQINKIIDETGVKIDIEQDGTIFISSVNEAMNQKAKQII. Residues 623 to 691 form the S1 motif domain; it reads GQIYLGKVKR…KQGRVNLSRK (69 aa).

The protein belongs to the polyribonucleotide nucleotidyltransferase family. It depends on Mg(2+) as a cofactor.

The protein localises to the cytoplasm. The catalysed reaction is RNA(n+1) + phosphate = RNA(n) + a ribonucleoside 5'-diphosphate. Functionally, involved in mRNA degradation. Catalyzes the phosphorolysis of single-stranded polyribonucleotides processively in the 3'- to 5'-direction. This Geobacillus sp. (strain WCH70) protein is Polyribonucleotide nucleotidyltransferase.